Here is a 133-residue protein sequence, read N- to C-terminus: Stage III sporulation protein AD (133 aa).

A run of 3 helical transmembrane segments spans residues 2–22 (QIDIVQIVGLGLIATFLSLIV), 29–49 (FAFLIVVFAGCAIFLYLVDQI), and 108–128 (ILILVMAVPILTVIIETILGL).

It is found in the cell membrane. This chain is Stage III sporulation protein AD (spoIIIAD), found in Bacillus subtilis (strain 168).